A 447-amino-acid chain; its full sequence is Elongation factor 1-alpha (447 aa).

One can recognise a tr-type G domain in the interval 5–230; that stretch reads KVHINIVVIG…DNINEPKRPS (226 aa). The segment at 14–21 is G1; the sequence is GHVDSGKS. 14-21 contacts GTP; the sequence is GHVDSGKS. Residue Lys-55 is modified to N6,N6-dimethyllysine. The tract at residues 70–74 is G2; it reads GITID. Lys-79 is modified (N6,N6,N6-trimethyllysine). The G3 stretch occupies residues 91-94; sequence DAPG. GTP contacts are provided by residues 91-95 and 153-156; these read DAPGH and NKMD. The G4 stretch occupies residues 153-156; that stretch reads NKMD. Position 187 is an N6,N6,N6-trimethyllysine (Lys-187). Positions 194 to 196 are G5; it reads SGF. N6-methyllysine is present on Lys-261. A 5-glutamyl glycerylphosphorylethanolamine modification is found at Glu-289. Residue Lys-306 is modified to N6,N6,N6-trimethyllysine. Glu-362 carries the post-translational modification 5-glutamyl glycerylphosphorylethanolamine. Lys-396 is subject to N6,N6,N6-trimethyllysine.

It belongs to the TRAFAC class translation factor GTPase superfamily. Classic translation factor GTPase family. EF-Tu/EF-1A subfamily.

It localises to the cytoplasm. This protein promotes the GTP-dependent binding of aminoacyl-tRNA to the A-site of ribosomes during protein biosynthesis. This is Elongation factor 1-alpha from Vicia faba (Broad bean).